Consider the following 1700-residue polypeptide: Leucine-rich repeat-containing protein 37A2 (1700 aa).

An N-terminal signal peptide occupies residues 1–35; the sequence is MSSAQCPALVCVMSRLRFWGPWPLLMWQLLWLLVK. Residues 36-1582 are Extracellular-facing; the sequence is EAQPLEWVKD…VPGYGYTDKL (1547 aa). Polar residues predominate over residues 54-65; the sequence is LGPPDSWSSHSS. Disordered regions lie at residues 54–104, 130–156, 169–534, 559–580, 619–642, and 729–752; these read LGPP…ESTE, QQDLKDKLSPQERLPVSPKKLKKDPAQ, QLST…AQPP, TEVELSPTMKETPTQPPKKVVP, PEPTTEVGHSTPPKRTIVSPKHPE, and TKPTTEVKPSPTTEETSTQPPDLG. An LRR 1 repeat occupies 137–160; the sequence is LSPQERLPVSPKKLKKDPAQRWSL. Polar residues-rich tracts occupy residues 169–189 and 223–237; these read QLSTPQSQKQTLQNEYSSTDT and ETQNPETLEDIQSSS. LRR repeat units lie at residues 230–253 and 267–290; these read LEDIQSSSLQQEAPAQLPQLLEEE and ESSMESLTLPNHEVSVQPPGEDQA. Positions 238–249 are enriched in low complexity; sequence LQQEAPAQLPQL. Asn296 carries an N-linked (GlcNAc...) asparagine glycan. The span at 307-326 shows a compositional bias: polar residues; sequence TITSEPTNETESSQAQQETP. A compositionally biased stretch (low complexity) spans 358–368; that stretch reads SEQQQPVQPSE. Residues 433–446 are compositionally biased toward polar residues; that stretch reads LVHQEATTRLSGSG. Over residues 482–493 the composition is skewed to low complexity; sequence SPEPINNENPSP. Low complexity predominate over residues 729 to 749; that stretch reads TKPTTEVKPSPTTEETSTQPP. 6 LRR repeats span residues 864 to 887, 888 to 911, 912 to 935, 937 to 959, 963 to 987, and 1002 to 1027; these read NGTFTILNFQGNYISYIDGNVWKA, YSWTEKLILRENNLTELHKDSFEG, LLSLQYLDLSCNKIQSIERHTFEP, PFLKFINLSCNVITELSFGTFQA, MQFLHKLILNHNPLTTVEDPYLFKL, and LTTLKNILMMTVELEKLILPSHMACC. An N-linked (GlcNAc...) asparagine glycan is attached at Asn1079. One copy of the LRR 10 repeat lies at 1124–1146; the sequence is LPYFSAVNLDVKSLLLPFIKLPT. Basic and acidic residues-rich tracts occupy residues 1182–1191 and 1201–1216; these read VGRQSIRREQ and AEEKRLGSPAPREVEQ. Disordered stretches follow at residues 1182 to 1227 and 1309 to 1328; these read VGRQ…EKLA and KTRSHVTHRTPKVKKSPKVR. Residues 1583-1603 form a helical membrane-spanning segment; it reads ILALIVTGILTILIILFCLIV. The Cytoplasmic portion of the chain corresponds to 1604 to 1700; sequence ICCHRRSLQE…TEEEESEALP (97 aa). Basic and acidic residues predominate over residues 1675 to 1685; it reads NEDKILNRDPG. Residues 1675-1700 are disordered; that stretch reads NEDKILNRDPGDSEAPTEEEESEALP. The span at 1689–1700 shows a compositional bias: acidic residues; the sequence is APTEEEESEALP.

Belongs to the LRRC37A family.

The protein resides in the membrane. The sequence is that of Leucine-rich repeat-containing protein 37A2 (LRRC37A2) from Homo sapiens (Human).